The following is a 160-amino-acid chain: Putative 4-hydroxy-4-methyl-2-oxoglutarate aldolase (160 aa).

Residues 78–81 (GDVI) and Arg100 each bind substrate. Asp101 is a binding site for a divalent metal cation.

The protein belongs to the class II aldolase/RraA-like family. As to quaternary structure, homotrimer. The cofactor is a divalent metal cation.

It catalyses the reaction 4-hydroxy-4-methyl-2-oxoglutarate = 2 pyruvate. The enzyme catalyses oxaloacetate + H(+) = pyruvate + CO2. Its function is as follows. Catalyzes the aldol cleavage of 4-hydroxy-4-methyl-2-oxoglutarate (HMG) into 2 molecules of pyruvate. Also contains a secondary oxaloacetate (OAA) decarboxylase activity due to the common pyruvate enolate transition state formed following C-C bond cleavage in the retro-aldol and decarboxylation reactions. The polypeptide is Putative 4-hydroxy-4-methyl-2-oxoglutarate aldolase (Mycolicibacterium vanbaalenii (strain DSM 7251 / JCM 13017 / BCRC 16820 / KCTC 9966 / NRRL B-24157 / PYR-1) (Mycobacterium vanbaalenii)).